We begin with the raw amino-acid sequence, 527 residues long: Protein disulfide-isomerase A2 (527 aa).

An N-terminal signal peptide occupies residues 1–20 (MDKQLLPVLLLLLGVSGSWG). Positions 20 to 41 (GQGEEPGGPSEVLPEEPTGEEV) are disordered. The Thioredoxin 1 domain maps to 29–155 (SEVLPEEPTG…IAEWLRRRVG (127 aa)). Residues cysteine 74 and cysteine 77 each act as nucleophile in the active site. Cysteine 74 and cysteine 77 are joined by a disulfide. 2 N-linked (GlcNAc...) asparagine glycosylation sites follow: asparagine 130 and asparagine 287. A Thioredoxin 2 domain is found at 355 to 499 (VIAITAASVA…FSKFLDSGGH (145 aa)). Active-site nucleophile residues include cysteine 421 and cysteine 424. Cysteine 421 and cysteine 424 are oxidised to a cystine. Residues 495-527 (DSGGHLPKEEPKEPAASAPEAQANSTLGPKEEL) are disordered. The N-linked (GlcNAc...) asparagine glycan is linked to asparagine 518. The Prevents secretion from ER signature appears at 524 to 527 (KEEL).

It belongs to the protein disulfide isomerase family. In terms of assembly, part of a large chaperone multiprotein complex comprising DNAJB11, HSP90B1, HSPA5, HYOU, PDIA2, PDIA4, PDIA6, PPIB, SDF2L1, UGGT1 and very small amounts of ERP29, but not, or at very low levels, CALR nor CANX. Post-translationally, glycosylated. In terms of tissue distribution, highly expressed in pancreas.

It localises to the endoplasmic reticulum lumen. The catalysed reaction is Catalyzes the rearrangement of -S-S- bonds in proteins.. In terms of biological role, acts as an intracellular estrogen-binding protein. May be involved in modulating cellular levels and biological functions of estrogens in the pancreas. May act as a chaperone that inhibits aggregation of misfolded proteins. The polypeptide is Protein disulfide-isomerase A2 (Mus musculus (Mouse)).